Consider the following 183-residue polypeptide: Ribosome-recycling factor (183 aa).

Belongs to the RRF family.

It localises to the cytoplasm. Functionally, responsible for the release of ribosomes from messenger RNA at the termination of protein biosynthesis. May increase the efficiency of translation by recycling ribosomes from one round of translation to another. This chain is Ribosome-recycling factor, found in Clostridium tetani (strain Massachusetts / E88).